The primary structure comprises 312 residues: Ribonuclease Z (312 aa).

Zn(2+)-binding residues include His-62, His-64, Asp-66, His-67, His-144, Asp-215, and His-273. Asp-66 (proton acceptor) is an active-site residue.

Belongs to the RNase Z family. Homodimer. Requires Zn(2+) as cofactor.

It carries out the reaction Endonucleolytic cleavage of RNA, removing extra 3' nucleotides from tRNA precursor, generating 3' termini of tRNAs. A 3'-hydroxy group is left at the tRNA terminus and a 5'-phosphoryl group is left at the trailer molecule.. In terms of biological role, zinc phosphodiesterase, which displays some tRNA 3'-processing endonuclease activity. Probably involved in tRNA maturation, by removing a 3'-trailer from precursor tRNA. The sequence is that of Ribonuclease Z from Prochlorococcus marinus (strain MIT 9301).